A 601-amino-acid chain; its full sequence is Glutamine--fructose-6-phosphate aminotransferase [isomerizing] (601 aa).

Catalysis depends on cysteine 2, which acts as the Nucleophile; for GATase activity. Positions 2–218 (CGIVGYIGYD…DHEIVIVKKD (217 aa)) constitute a Glutamine amidotransferase type-2 domain. SIS domains are found at residues 284–423 (IIND…EHGR) and 453–591 (IATD…VDKP). Residue lysine 596 is the For Fru-6P isomerization activity of the active site.

As to quaternary structure, homodimer.

It localises to the cytoplasm. The enzyme catalyses D-fructose 6-phosphate + L-glutamine = D-glucosamine 6-phosphate + L-glutamate. Functionally, catalyzes the first step in hexosamine metabolism, converting fructose-6P into glucosamine-6P using glutamine as a nitrogen source. The chain is Glutamine--fructose-6-phosphate aminotransferase [isomerizing] from Staphylococcus aureus (strain Mu50 / ATCC 700699).